The following is a 1616-amino-acid chain: Putative inactive phenolphthiocerol synthesis polyketide synthase type I Pks1 (1616 aa).

Residues 83–397 are acyltransferase; sequence TVVVFPGQGA…GQVFTTGVPV (315 aa). The active-site For acyltransferase activity is S174. Residues 445–567 are N-terminal hotdog fold; the sequence is HALLGAVVER…GMLGVAAAET (123 aa). The segment at 445-605 is dehydratase; it reads HALLGAVVER…YAYGPAFQGL (161 aa). The PKS/mFAS DH domain maps to 445 to 719; sequence HALLGAVVER…TRPITAEQLR (275 aa). Residue H477 is the Proton acceptor; for dehydratase activity of the active site. Residues 579-719 form a C-terminal hotdog fold region; sequence AESVDISDGY…TRPITAEQLR (141 aa). Residue D640 is the Proton donor; for dehydratase activity of the active site. Residues 910–1215 form an enoylreductase region; sequence GTLEDLVIQP…QARHIGKVVL (306 aa). NADP(+)-binding positions include 1040–1057 and 1229–1244; these read VLIHAGTGGVGMAAVQLA and TVVITGATGAVGGVLA. The beta-ketoacyl reductase stretch occupies residues 1228 to 1409; the sequence is GTVVITGATG…SLAWGLWEQP (182 aa). In terms of domain architecture, Carrier spans 1514-1589; sequence ELLVGLVCLQ…AVAEYVAQQM (76 aa). Residue S1549 is modified to O-(pantetheine 4'-phosphoryl)serine. Residues 1588–1604 are compositionally biased toward polar residues; it reads QMSGSRPTESGDPTSQV. The tract at residues 1588-1616 is disordered; the sequence is QMSGSRPTESGDPTSQVVEPAAAEVSVHA.

The cofactor is pantetheine 4'-phosphate.

It functions in the pathway lipid metabolism; fatty acid biosynthesis. In terms of biological role, may play a role in phthiocerol biosynthesis. In Mycobacterium tuberculosis (strain ATCC 25618 / H37Rv), this protein is Putative inactive phenolphthiocerol synthesis polyketide synthase type I Pks1 (pks1).